The sequence spans 549 residues: Membrane protein insertase YidC (549 aa).

The chain crosses the membrane as a helical span at residues N6–D26. The interval A35–A55 is disordered. 4 helical membrane passes run Q349–V369, L424–L444, L462–I482, and P503–V523.

It belongs to the OXA1/ALB3/YidC family. Type 1 subfamily. As to quaternary structure, interacts with the Sec translocase complex via SecD. Specifically interacts with transmembrane segments of nascent integral membrane proteins during membrane integration.

It is found in the cell inner membrane. Its function is as follows. Required for the insertion and/or proper folding and/or complex formation of integral membrane proteins into the membrane. Involved in integration of membrane proteins that insert both dependently and independently of the Sec translocase complex, as well as at least some lipoproteins. Aids folding of multispanning membrane proteins. This Tolumonas auensis (strain DSM 9187 / NBRC 110442 / TA 4) protein is Membrane protein insertase YidC.